Here is a 990-residue protein sequence, read N- to C-terminus: Membrane alanyl aminopeptidase (990 aa).

Positions 1–15 (FTIFLGVALLQGVLT) are cleaved as a signal peptide. The propeptide at 16-35 (LSPIPVPEEEWAEFSRMLRD) is activation peptide. An N-linked (GlcNAc...) asparagine glycan is attached at asparagine 295. 321–325 (GAMEN) lines the substrate pocket. Residue histidine 357 participates in Zn(2+) binding. The Proton acceptor role is filled by glutamate 358. Positions 361 and 380 each coordinate Zn(2+). 3 N-linked (GlcNAc...) asparagine glycosylation sites follow: asparagine 609, asparagine 623, and asparagine 752. Glycine 968 is lipidated: GPI-anchor amidated glycine. Positions 969–990 (SGNIAALSVVSLLVTLAINMVA) are cleaved as a propeptide — removed in mature form.

The protein belongs to the peptidase M1 family. Zn(2+) serves as cofactor. As to expression, midgut brush-border membrane.

The protein resides in the cell membrane. Its function is as follows. Binds to the B.thuringiensis toxin, CryIA(C). The polypeptide is Membrane alanyl aminopeptidase (Manduca sexta (Tobacco hawkmoth)).